A 325-amino-acid polypeptide reads, in one-letter code: Golgi to ER traffic protein 4 homolog A (325 aa).

2 disordered regions span residues 1-22 (MAAA…GGVQ) and 306-325 (SGED…IELD). The segment covering 307 to 317 (GEDDDVEDGQE) has biased composition (acidic residues).

It belongs to the GET4 family. In terms of assembly, component of the bag6/bat3 complex.

Its subcellular location is the cytoplasm. It is found in the cytosol. As part of a cytosolic protein quality control complex, the bag6/bat3 complex, maintains misfolded and hydrophobic patches-containing proteins in a soluble state and participates in their proper delivery to the endoplasmic reticulum or alternatively can promote their sorting to the proteasome where they undergo degradation. The bag6/bat3 complex is involved in the post-translational delivery of tail-anchored/type II transmembrane proteins to the endoplasmic reticulum membrane. Similarly, the bag6/bat3 complex also functions as a sorting platform for proteins of the secretory pathway that are mislocalized to the cytosol either delivering them to the proteasome for degradation or to the endoplasmic reticulum. The bag6/bat3 complex also plays a role in the endoplasmic reticulum-associated degradation (ERAD), a quality control mechanism that eliminates unwanted proteins of the endoplasmic reticulum through their retrotranslocation to the cytosol and their targeting to the proteasome. It maintains these retrotranslocated proteins in an unfolded yet soluble state condition in the cytosol to ensure their proper delivery to the proteasome. This is Golgi to ER traffic protein 4 homolog A (get4-a) from Xenopus laevis (African clawed frog).